The primary structure comprises 357 residues: DnaJ homolog subfamily C member 25 (357 aa).

Residues 19–39 (WLLLAPLLLVPLLARPAEALV) traverse the membrane as a helical segment. One can recognise a J domain in the interval 48 to 121 (DCYEVLGVSR…ETRKDYDYML (74 aa)). The next 2 helical transmembrane spans lie at 147 to 167 (VVIL…WWNS) and 241 to 261 (LLLF…AWYC).

The protein belongs to the DNAJC25 family.

The protein resides in the membrane. The sequence is that of DnaJ homolog subfamily C member 25 (Dnajc25) from Mus musculus (Mouse).